The primary structure comprises 529 residues: MAELTIRPEEIRDALENFVQSYKPDAASREEVGTVTLAGDGIAKVEGLPSAMANELLKFEDGTLGLALNLEEREIGCVVLGEFSGIEEGQPVSRTGEVLSVAVAEGYLGRVVDPLGNPIDGLGEIETSGRRALELQAPTVMQRKSVHEPMETGYKAVDAMTPIGRGQRQLIIGDRQTGKTALAVDTIINQRDNWRTGDPNKQVRCIYVAIGQKGSTIASVRGALEENGALEYTTIVAAPASDPAGFKYLAPYTGSAIGQQWMYEGKHVLIIFDDLSKQADAYRAVSLLLRRPPGREAYPGDVFYLHSRLLERCAKLSDAEGAGSMTGLPIVETKANDVSAFIPTNVISITDGQCFLESDLFNAGQRPALNVGISVSRVGGSAQHKAMKQVSGRLRVDLAQFRELEAFAAFGSDLDAASKSQLERGQRMVELLKQNQYQPMSTEDQVVSVWAGTTGKMDEVPVADIRRFEKELLEYLHRQEQGLMTSIREGGKMSDDTLQAVAEAIAAFKKQFETSDGKLLGEDAPSAAK.

173–180 contributes to the ATP binding site; it reads GDRQTGKT.

Belongs to the ATPase alpha/beta chains family. As to quaternary structure, F-type ATPases have 2 components, CF(1) - the catalytic core - and CF(0) - the membrane proton channel. CF(1) has five subunits: alpha(3), beta(3), gamma(1), delta(1), epsilon(1). CF(0) has three main subunits: a(1), b(2) and c(9-12). The alpha and beta chains form an alternating ring which encloses part of the gamma chain. CF(1) is attached to CF(0) by a central stalk formed by the gamma and epsilon chains, while a peripheral stalk is formed by the delta and b chains.

The protein resides in the cell membrane. The enzyme catalyses ATP + H2O + 4 H(+)(in) = ADP + phosphate + 5 H(+)(out). Its function is as follows. Produces ATP from ADP in the presence of a proton gradient across the membrane. The alpha chain is a regulatory subunit. This Streptomyces lividans protein is ATP synthase subunit alpha.